The following is a 127-amino-acid chain: PanD regulatory factor (127 aa).

The N-acetyltransferase domain maps to 1-127 (MKLTILRLEH…TAQHDGWEKR (127 aa)). Residues 66–68 (LRV) and 72–79 (TRRRGVGQ) contribute to the CoA site.

Belongs to the PanZ/PanM family. Interacts with PanD in the presence of CoA. Monomer.

Its function is as follows. Controls both the activation and catalytic activity of PanD in a coenzyme A (CoA)-dependent fashion. Binding of CoA or a derivative to PanM leads to interaction with PanD, which promotes the processing and activation of pro-PanD, and subsequent substrate-mediated inhibition of the active form of PanD. Lacks acetyltransferase activity. This chain is PanD regulatory factor, found in Salmonella typhimurium (strain LT2 / SGSC1412 / ATCC 700720).